The following is a 290-amino-acid chain: Protease HtpX homolog (290 aa).

2 helical membrane-spanning segments follow: residues 4–24 and 39–59; these read IFLF…VLSL and PMLL…SLLI. A Zn(2+)-binding site is contributed by His-144. Glu-145 is an active-site residue. His-148 lines the Zn(2+) pocket. The next 2 membrane-spanning stretches (helical) occupy residues 159–179 and 197–217; these read LVQG…GYFV and ITVI…VAWF. Glu-222 serves as a coordination point for Zn(2+).

It belongs to the peptidase M48B family. It depends on Zn(2+) as a cofactor.

It localises to the cell inner membrane. In Janthinobacterium sp. (strain Marseille) (Minibacterium massiliensis), this protein is Protease HtpX homolog.